A 167-amino-acid polypeptide reads, in one-letter code: Mitochondrial fission 1 protein B (167 aa).

One copy of the TPR repeat lies at 92–125 (REKLYLLALGYYRSGDFSRSRDCIERCLEVEPES). A helical membrane pass occupies residues 144–164 (VIGVGIAVTAVGVVAGIAAAI).

It belongs to the FIS1 family. Interacts with PEX11A, PEX11B, PEX11C, PEX11D and PEX11E.

The protein resides in the mitochondrion outer membrane. The protein localises to the peroxisome membrane. Functionally, component of the peroxisomal and mitochondrial division machineries. Plays a role in promoting the fission of mitochondria and peroxisomes. In association with PEX11C, PEX11D, PEX11E and DRP3A, is involved in cell cycle-associated constitutive self-replication of preexisting peroxisomes. This is Mitochondrial fission 1 protein B (FIS1B) from Arabidopsis thaliana (Mouse-ear cress).